The following is a 134-amino-acid chain: UPF0299 membrane protein KPK_1586 (134 aa).

The next 4 membrane-spanning stretches (helical) occupy residues 5–25, 26–46, 66–86, and 93–113; these read LTIIWQYLRAFVLIYACLYAG, IFIAGLLPITIPGSIIGMLIL, ILIRYMALLFVPIGVGVMQYW, and LGPVVISCAISTLVVFVVVSW.

Belongs to the UPF0299 family.

It localises to the cell inner membrane. The sequence is that of UPF0299 membrane protein KPK_1586 from Klebsiella pneumoniae (strain 342).